Consider the following 252-residue polypeptide: CLAVATA3/ESR (CLE)-related protein 4A-1 (252 aa).

Positions 1 to 21 (MAKNAMLCLLILRVVLALAFA) are cleaved as a signal peptide. A required for secretion from the host cytoplasm to the host apoplasm region spans residues 21–83 (ATNKKGDEEP…SNQLPNNNWM (63 aa)). Residue asparagine 32 is glycosylated (N-linked (GlcNAc...) asparagine). The disordered stretch occupies residues 116-252 (RKTGMHSQRH…APAGPDPIHH (137 aa)). 2 stretches are compositionally biased toward basic and acidic residues: residues 125–137 (HHEE…EKRV) and 144–242 (PIHH…EKRG). Residues 127–135 (EETTLEQEK) form an A-1 repeat. Residues 127 to 219 (EETTLEQEKR…HEETTLEQEK (93 aa)) form a 6 X approximate repeat A region. A CLE-1 repeat occupies 136-147 (RVAGAGPDPIHH). Residues 136–252 (RVAGAGPDPI…APAGPDPIHH (117 aa)) form a 6 X approximate repeat CLE region. An A-2 repeat occupies 148–156 (QDTTLEQEK). The stretch at 157–168 (RAVPAGPDPKHH) is one CLE-2 repeat. Residues 169-177 (EETTLEQEK) form an A-3 repeat. A CLE-3 repeat occupies 178–189 (RAVPAGPDPKHH). Residues 190-198 (EETTLEQEK) form an A-4 repeat. The CLE-4 repeat unit spans residues 199-210 (RAVPAGPDPKHH). One copy of the A-5 repeat lies at 211–219 (EETTLEQEK). A CLE-5 repeat occupies 220 to 231 (RAVPAGPDPKHH). The stretch at 232–240 (EETTFEQEK) is one A-6 repeat. One copy of the CLE-6 repeat lies at 241 to 252 (RGAPAGPDPIHH).

The protein belongs to the CLV3/ESR signal peptide family. Highly expressed exclusively within the dorsal esophageal gland cell during syncytium formation in host plants.

The protein localises to the secreted. The protein resides in the host cytoplasm. It is found in the host extracellular space. Its subcellular location is the extracellular space. It localises to the apoplast. Functionally, mimics host plant CLE extracellular signal peptides that regulate cell fate. May play a role in the differentiation or division of feeding cells (syncytia) induced in plant roots during infection. The protein is CLAVATA3/ESR (CLE)-related protein 4A-1 (CLE-4A-1) of Globodera rostochiensis (Golden nematode worm).